The following is a 275-amino-acid chain: Formamidopyrimidine-DNA glycosylase (275 aa).

P2 acts as the Schiff-base intermediate with DNA in catalysis. E3 (proton donor) is an active-site residue. K58 acts as the Proton donor; for beta-elimination activity in catalysis. The DNA site is built by H93, R111, and R156. Residues 241–275 (FAYDRAGLPCRVCGTPIRQIVQGQRSTYFCPTCQR) form an FPG-type zinc finger. The Proton donor; for delta-elimination activity role is filled by R265.

It belongs to the FPG family. In terms of assembly, monomer. The cofactor is Zn(2+).

The catalysed reaction is Hydrolysis of DNA containing ring-opened 7-methylguanine residues, releasing 2,6-diamino-4-hydroxy-5-(N-methyl)formamidopyrimidine.. The enzyme catalyses 2'-deoxyribonucleotide-(2'-deoxyribose 5'-phosphate)-2'-deoxyribonucleotide-DNA = a 3'-end 2'-deoxyribonucleotide-(2,3-dehydro-2,3-deoxyribose 5'-phosphate)-DNA + a 5'-end 5'-phospho-2'-deoxyribonucleoside-DNA + H(+). Its function is as follows. Involved in base excision repair of DNA damaged by oxidation or by mutagenic agents. Acts as a DNA glycosylase that recognizes and removes damaged bases. Has a preference for oxidized purines, such as 7,8-dihydro-8-oxoguanine (8-oxoG). Has AP (apurinic/apyrimidinic) lyase activity and introduces nicks in the DNA strand. Cleaves the DNA backbone by beta-delta elimination to generate a single-strand break at the site of the removed base with both 3'- and 5'-phosphates. In Burkholderia vietnamiensis (strain G4 / LMG 22486) (Burkholderia cepacia (strain R1808)), this protein is Formamidopyrimidine-DNA glycosylase.